The sequence spans 269 residues: 4-hydroxy-tetrahydrodipicolinate reductase (269 aa).

Residues 8–13 and E34 each bind NAD(+); that span reads GAAGRM. Position 35 (R35) interacts with NADP(+). NAD(+)-binding positions include 98 to 100 and 122 to 125; these read GTT and APNY. Catalysis depends on H155, which acts as the Proton donor/acceptor. H156 lines the (S)-2,3,4,5-tetrahydrodipicolinate pocket. The active-site Proton donor is K159. 165–166 serves as a coordination point for (S)-2,3,4,5-tetrahydrodipicolinate; the sequence is GT.

Belongs to the DapB family.

The protein localises to the cytoplasm. The catalysed reaction is (S)-2,3,4,5-tetrahydrodipicolinate + NAD(+) + H2O = (2S,4S)-4-hydroxy-2,3,4,5-tetrahydrodipicolinate + NADH + H(+). It carries out the reaction (S)-2,3,4,5-tetrahydrodipicolinate + NADP(+) + H2O = (2S,4S)-4-hydroxy-2,3,4,5-tetrahydrodipicolinate + NADPH + H(+). The protein operates within amino-acid biosynthesis; L-lysine biosynthesis via DAP pathway; (S)-tetrahydrodipicolinate from L-aspartate: step 4/4. Catalyzes the conversion of 4-hydroxy-tetrahydrodipicolinate (HTPA) to tetrahydrodipicolinate. The sequence is that of 4-hydroxy-tetrahydrodipicolinate reductase from Vibrio cholerae serotype O1 (strain ATCC 39315 / El Tor Inaba N16961).